Consider the following 299-residue polypeptide: Ribosomal protein uL3 glutamine methyltransferase (299 aa).

It belongs to the protein N5-glutamine methyltransferase family. PrmB subfamily.

It carries out the reaction L-glutaminyl-[ribosomal protein uL3] + S-adenosyl-L-methionine = N(5)-methyl-L-glutaminyl-[ribosomal protein uL3] + S-adenosyl-L-homocysteine + H(+). In terms of biological role, methylates large ribosomal subunit protein uL3 on a specific glutamine residue. The chain is Ribosomal protein uL3 glutamine methyltransferase from Neisseria gonorrhoeae (strain ATCC 700825 / FA 1090).